Reading from the N-terminus, the 453-residue chain is UDP-glycosyltransferase 79B3 (453 aa).

UDP-alpha-D-glucose is bound by residues Ser-266, 325–327, 342–350, and 364–367; these read VQQ, HCGFGSMWE, and LGDQ.

Belongs to the UDP-glycosyltransferase family.

In Arabidopsis thaliana (Mouse-ear cress), this protein is UDP-glycosyltransferase 79B3 (UGT79B3).